The chain runs to 267 residues: Probable beta-lactamase YbxI (267 aa).

A signal peptide spans 1–23 (MKKWIYVVLVLSIAGIGGFSVHA). Serine 76 functions as the Acyl-ester intermediate in the catalytic mechanism. At lysine 79 the chain carries N6-carboxylysine. 214–216 (KTG) is a binding site for substrate.

Belongs to the class-D beta-lactamase family.

It carries out the reaction a beta-lactam + H2O = a substituted beta-amino acid. This chain is Probable beta-lactamase YbxI (ybxI), found in Bacillus subtilis (strain 168).